Here is a 633-residue protein sequence, read N- to C-terminus: Probable potassium transport system protein Kup 2 (633 aa).

Transmembrane regions (helical) follow at residues 18–38, 61–81, 109–129, 145–165, 173–193, 211–231, 255–275, 287–307, 345–365, 371–391, 405–425, and 427–447; these read FLAM…TSPL, LISL…VLFL, LMFM…MITP, PAFH…LFAV, VSIF…AAGV, AVTF…AVFL, WFAV…ALVL, LMFP…ATII, IYLP…MFMF, LATA…VLAF, ATAV…ANLF, and IHDG…TMWT.

It belongs to the HAK/KUP transporter (TC 2.A.72) family.

It localises to the cell inner membrane. It catalyses the reaction K(+)(in) + H(+)(in) = K(+)(out) + H(+)(out). Its function is as follows. Transport of potassium into the cell. Likely operates as a K(+):H(+) symporter. This Sinorhizobium medicae (strain WSM419) (Ensifer medicae) protein is Probable potassium transport system protein Kup 2.